The following is a 44-amino-acid chain: Large ribosomal subunit protein bL36 (44 aa).

Belongs to the bacterial ribosomal protein bL36 family.

The chain is Large ribosomal subunit protein bL36 from Pseudoalteromonas translucida (strain TAC 125).